Here is a 65-residue protein sequence, read N- to C-terminus: Myosin-11 (65 aa).

The Myosin motor domain maps to 1-65 (RSGKLDAFLV…NWQWWRLFTK (65 aa)).

Belongs to the TRAFAC class myosin-kinesin ATPase superfamily. Myosin family. As to quaternary structure, muscle myosin is a hexameric protein that consists of 2 heavy chain subunits (MHC), 2 alkali light chain subunits (MLC) and 2 regulatory light chain subunits (MLC-2).

The protein resides in the melanosome. It localises to the cytoplasm. It is found in the myofibril. Muscle contraction. In Sus scrofa (Pig), this protein is Myosin-11 (MYH11).